We begin with the raw amino-acid sequence, 280 residues long: uncharacterized protein (280 aa).

Tyrosine 54 (proton donor) is an active-site residue. Histidine 116 contributes to the substrate binding site. 194–246 is a binding site for NADP(+); the sequence is SPLMQGQLLDHPVLADIAQTYNKSVAQIILRWDLQHGIITIPKSTKEHRIKEN.

It belongs to the aldo/keto reductase family.

This is an uncharacterized protein from Bacillus subtilis (strain 168).